Consider the following 451-residue polypeptide: uncharacterized protein (451 aa).

Mn(2+) contacts are provided by Asp305, Asp316, His384, Glu414, and Glu428.

This sequence belongs to the peptidase M24B family. Requires Mn(2+) as cofactor.

This is an uncharacterized protein from Schizosaccharomyces pombe (strain 972 / ATCC 24843) (Fission yeast).